The primary structure comprises 54 residues: Large ribosomal subunit protein bL33 (54 aa).

The protein belongs to the bacterial ribosomal protein bL33 family.

The polypeptide is Large ribosomal subunit protein bL33 (Stenotrophomonas maltophilia (strain R551-3)).